Reading from the N-terminus, the 304-residue chain is Nod factor export ATP-binding protein I (304 aa).

The 231-residue stretch at 6-236 (IEFDKVKKSY…EIGCDVIEIF (231 aa)) folds into the ABC transporter domain. 38 to 45 (GPNGAGKT) serves as a coordination point for ATP.

This sequence belongs to the ABC transporter superfamily. Lipooligosaccharide exporter (TC 3.A.1.102) family. The complex is composed of two ATP-binding proteins (NodI) and two transmembrane proteins (NodJ).

It localises to the cell inner membrane. Functionally, part of the ABC transporter complex NodIJ involved in the export of the nodulation factors (Nod factors), the bacterial signal molecules that induce symbiosis and subsequent nodulation induction. Nod factors are LCO (lipo-chitin oligosaccharide), a modified beta-1,4-linked N-acetylglucosamine oligosaccharide. This subunit is responsible for energy coupling to the transport system. The protein is Nod factor export ATP-binding protein I of Paraburkholderia xenovorans (strain LB400).